The chain runs to 124 residues: Aspartate 1-decarboxylase (124 aa).

Ser-21 acts as the Schiff-base intermediate with substrate; via pyruvic acid in catalysis. Ser-21 bears the Pyruvic acid (Ser) mark. Thr-53 provides a ligand contact to substrate. Tyr-54 (proton donor) is an active-site residue. Residue 69-71 participates in substrate binding; the sequence is GAA.

It belongs to the PanD family. As to quaternary structure, heterooctamer of four alpha and four beta subunits. The cofactor is pyruvate. Is synthesized initially as an inactive proenzyme, which is activated by self-cleavage at a specific serine bond to produce a beta-subunit with a hydroxyl group at its C-terminus and an alpha-subunit with a pyruvoyl group at its N-terminus.

It localises to the cytoplasm. The catalysed reaction is L-aspartate + H(+) = beta-alanine + CO2. The protein operates within cofactor biosynthesis; (R)-pantothenate biosynthesis; beta-alanine from L-aspartate: step 1/1. Its function is as follows. Catalyzes the pyruvoyl-dependent decarboxylation of aspartate to produce beta-alanine. In Dehalococcoides mccartyi (strain CBDB1), this protein is Aspartate 1-decarboxylase.